The chain runs to 743 residues: Alpha-N-acetylglucosaminidase (743 aa).

An N-terminal signal peptide occupies residues 1-23; it reads MEAVAVAAAVGVLLLAGAGGAAG. N-linked (GlcNAc...) asparagine glycosylation is found at Asn-261, Asn-272, Asn-435, Asn-503, Asn-526, and Asn-532.

The protein belongs to the glycosyl hydrolase 89 family. Monomer and homodimer. Liver, ovary, peripheral blood leukocytes, testis, prostate, spleen, colon, lung, placenta and kidney.

It localises to the lysosome. It carries out the reaction Hydrolysis of terminal non-reducing N-acetyl-D-glucosamine residues in N-acetyl-alpha-D-glucosaminides.. Involved in the degradation of heparan sulfate. The polypeptide is Alpha-N-acetylglucosaminidase (NAGLU) (Homo sapiens (Human)).